We begin with the raw amino-acid sequence, 362 residues long: NAD(P)H-quinone oxidoreductase subunit 1, chloroplastic (362 aa).

8 helical membrane-spanning segments follow: residues 29 to 49 (ILPILTLLLGITIEVLVIVWL), 103 to 123 (IAVISILLSFLVIPLGYHFVL), 128 to 148 (IGVFLWIAISSIAPIGLLMAG), 164 to 184 (AAQSISYEIPLTFCVLAISLL), 202 to 222 (FFGWNIWRQPIGFLVFLISSL), 247 to 267 (YSGIKYGLFYLVSYLNLLVSS), 303 to 323 (TIGIFITLTKAYLFLFISITI), and 335 to 355 (LLNLGWKFLLPISLGNLLLTT).

This sequence belongs to the complex I subunit 1 family. In terms of assembly, NDH is composed of at least 16 different subunits, 5 of which are encoded in the nucleus.

It localises to the plastid. The protein resides in the chloroplast thylakoid membrane. The catalysed reaction is a plastoquinone + NADH + (n+1) H(+)(in) = a plastoquinol + NAD(+) + n H(+)(out). It catalyses the reaction a plastoquinone + NADPH + (n+1) H(+)(in) = a plastoquinol + NADP(+) + n H(+)(out). NDH shuttles electrons from NAD(P)H:plastoquinone, via FMN and iron-sulfur (Fe-S) centers, to quinones in the photosynthetic chain and possibly in a chloroplast respiratory chain. The immediate electron acceptor for the enzyme in this species is believed to be plastoquinone. Couples the redox reaction to proton translocation, and thus conserves the redox energy in a proton gradient. The protein is NAD(P)H-quinone oxidoreductase subunit 1, chloroplastic of Agrostis stolonifera (Creeping bentgrass).